The sequence spans 183 residues: Akirin-1B (183 aa).

The interval 14 to 43 (EALMSPQSPKRRRCAPLPGSPATPSPQRCG) is disordered. Positions 180–183 (SYVS) match the SYVS motif motif.

Belongs to the akirin family.

It localises to the nucleus. Functionally, molecular adapter that acts as a bridge between proteins, and which is involved skeletal muscle development. Functions as a signal transducer for MSTN during skeletal muscle regeneration and myogenesis. The protein is Akirin-1B (akirin1-b) of Xenopus laevis (African clawed frog).